A 156-amino-acid chain; its full sequence is Protein-export protein SecB (156 aa).

It belongs to the SecB family. Homotetramer, a dimer of dimers. One homotetramer interacts with 1 SecA dimer.

It localises to the cytoplasm. One of the proteins required for the normal export of preproteins out of the cell cytoplasm. It is a molecular chaperone that binds to a subset of precursor proteins, maintaining them in a translocation-competent state. It also specifically binds to its receptor SecA. This is Protein-export protein SecB from Paraburkholderia phymatum (strain DSM 17167 / CIP 108236 / LMG 21445 / STM815) (Burkholderia phymatum).